We begin with the raw amino-acid sequence, 690 residues long: Ligand of Numb protein X 2 (690 aa).

The segment at Cys50–Arg88 adopts an RING-type zinc-finger fold. Residues Ser198 to Leu224 form a disordered region. An NPXY motif motif is present at residues Asn208–Phe211. PDZ domains follow at residues Thr233–Arg318, Gln339–Gly422, His468–Glu554, and Asp600–Ser688. The segment at Ile418–His455 is disordered.

As to quaternary structure, interacts with the phosphotyrosine interaction domain of NUMB.

This chain is Ligand of Numb protein X 2 (LNX2), found in Homo sapiens (Human).